The chain runs to 495 residues: Polybrominated aromatic compounds synthase (495 aa).

Residue cysteine 437 coordinates heme.

Belongs to the cytochrome P450 family. Heme is required as a cofactor.

Its function is as follows. Cytochrome P450 protein involved in the biosynthesis of polybrominated aromatic organic compounds. In the presence of ferredoxin, ferredoxin reductase and NADH, catalyzes the coupling of bromophenols and bromopyrroles, forming various polybrominated biphenyls and hydroxylated polybrominated diphenyl ethers (OH-BDE). Can also mediate the heterocoupling of 3,5-dibromocatechol, forming six different compounds, including polybrominated dibenzo-p-dioxins, which are among the most toxic molecules known to man. In Marinomonas mediterranea (strain ATCC 700492 / JCM 21426 / NBRC 103028 / MMB-1), this protein is Polybrominated aromatic compounds synthase.